The sequence spans 838 residues: P protein (838 aa).

Residues 1–179 (MHLEGRDGRR…KLRRCVQWLK (179 aa)) lie on the Cytoplasmic side of the membrane. Disordered stretches follow at residues 38 to 60 (LPRG…GQSS) and 74 to 94 (KGRS…DSCF). A compositionally biased stretch (polar residues) spans 78–87 (HSSLPQMSSS). Residues 180–197 (VMGLFAFVVLCSILFSLY) traverse the membrane as a helical segment. The Extracellular portion of the chain corresponds to 198 to 330 (PDQGKLWQLL…QYLRGSVETQ (133 aa)). Asn214, Asn218, and Asn273 each carry an N-linked (GlcNAc...) asparagine glycan. The helical transmembrane segment at 331-347 (VTIATAILAGVYALIIF) threads the bilayer. Topologically, residues 348-353 (EIVHRT) are cytoplasmic. A helical membrane pass occupies residues 354–370 (LAAMLGSLAALAALAVI). The Extracellular segment spans residues 371–384 (GDRPSLTHVVEWID). Residues 385–401 (FETLALLFGMMILVAIF) traverse the membrane as a helical segment. The Cytoplasmic portion of the chain corresponds to 402–423 (SETGFFDYCAVKAYRLSRGRVW). A helical transmembrane segment spans residues 424-440 (AMIIMLCLIAAVLSAFL). Topologically, residues 441 to 513 (DNVTTMLLFT…DFAGFTAHMF (73 aa)) are extracellular. Asn442 is a glycosylation site (N-linked (GlcNAc...) asparagine). The helical transmembrane segment at 514–530 (IGICLVLLVCFPLLRLL) threads the bilayer. At 531–620 (YWNRKLYNKE…LQKKHRISDG (90 aa)) the chain is on the cytoplasmic side. Residues 621 to 637 (ILLAKCLTVLGFVIFMF) form a helical membrane-spanning segment. Residues 638–647 (FLNSFVPGIH) are Extracellular-facing. The helical transmembrane segment at 648 to 664 (LDLGWIAILGAIWLLIL) threads the bilayer. Topologically, residues 665-679 (ADIHDFEIILHRVEW) are cytoplasmic. Residues 680-696 (ATLLFFAALFVLMEALA) traverse the membrane as a helical segment. The Extracellular segment spans residues 697–720 (HLHLIEYVGEQTALLIKMVPEEQR). Residues 721 to 737 (LIAAIVLVVWVSALASS) traverse the membrane as a helical segment. Residues 738 to 760 (LIDNIPFTATMIPVLLNLSHDPE) are Cytoplasmic-facing. The helical transmembrane segment at 761–777 (VGLPAPPLMYALAFGAC) threads the bilayer. The Extracellular portion of the chain corresponds to 778–817 (LGGNGTLIGASANVVCAGIAEQHGYGFSFMEFFRLGFPMM). N-linked (GlcNAc...) asparagine glycosylation is present at Asn781. Residues 818-834 (VVSCTVGMCYLLVAHVV) traverse the membrane as a helical segment. The Cytoplasmic portion of the chain corresponds to 835 to 838 (VGWN).

It belongs to the CitM (TC 2.A.11) transporter family. In terms of tissue distribution, expressed in melanocytes and retinal pigment epithelium.

It is found in the melanosome membrane. The enzyme catalyses chloride(in) = chloride(out). In terms of biological role, contributes to a melanosome-specific anion (chloride) current that modulates melanosomal pH for optimal tyrosinase activity required for melanogenesis and the melanosome maturation. One of the components of the mammalian pigmentary system. May serve as a key control point at which ethnic skin color variation is determined. Major determinant of brown and/or blue eye color. Seems to regulate the post-translational processing of tyrosinase, which catalyzes the limiting reaction in melanin synthesis. In Homo sapiens (Human), this protein is P protein.